We begin with the raw amino-acid sequence, 233 residues long: MSVLNTKINTSPRAYMLVKERGPFVIDVTVTPNTNFPYSYAITNTMSINLDSSYSDKNISWKSESGNTRITITGSVNSTESYLFLIKSDIEQNVTINIKNRNSSTTTTTNASSSDSSMYNTTRSTQRRVTYDDDDDEYDDKNYFGWSSSNGISDNITTSKFSEIFKKFSLLQWVLVAALAFFMYYFLWKKNRRGSDDYTTGSVYDMPLIDTPIRDSYRLPQSFKRDALYRTSI.

Residues Asn58, Asn77, Asn93, Asn102, Asn110, Asn120, and Asn155 are each glycosylated (N-linked (GlcNAc...) asparagine; by host). Residues 102–124 (NSSTTTTTNASSSDSSMYNTTRS) show a composition bias toward low complexity. The interval 102–132 (NSSTTTTTNASSSDSSMYNTTRSTQRRVTYD) is disordered. A helical transmembrane segment spans residues 168–188 (FSLLQWVLVAALAFFMYYFLW).

The protein belongs to the ascovirus HvAv ORF58 family.

The protein localises to the membrane. This is an uncharacterized protein from Trichoplusia ni ascovirus 2c (TnAV-2c).